Here is a 146-residue protein sequence, read N- to C-terminus: uncharacterized protein (146 aa).

The HTH marR-type domain maps to 1–137 (MLSQEFFNSF…TINVMNQIHE (137 aa)).

This is an uncharacterized protein from Staphylococcus aureus (strain N315).